Reading from the N-terminus, the 438-residue chain is Gamma-glutamyl phosphate reductase (438 aa).

It belongs to the gamma-glutamyl phosphate reductase family.

Its subcellular location is the cytoplasm. The enzyme catalyses L-glutamate 5-semialdehyde + phosphate + NADP(+) = L-glutamyl 5-phosphate + NADPH + H(+). It functions in the pathway amino-acid biosynthesis; L-proline biosynthesis; L-glutamate 5-semialdehyde from L-glutamate: step 2/2. Functionally, catalyzes the NADPH-dependent reduction of L-glutamate 5-phosphate into L-glutamate 5-semialdehyde and phosphate. The product spontaneously undergoes cyclization to form 1-pyrroline-5-carboxylate. This chain is Gamma-glutamyl phosphate reductase, found in Prochlorococcus marinus (strain MIT 9303).